Consider the following 210-residue polypeptide: Probable nicotinate-nucleotide adenylyltransferase (210 aa).

It belongs to the NadD family.

The enzyme catalyses nicotinate beta-D-ribonucleotide + ATP + H(+) = deamido-NAD(+) + diphosphate. It functions in the pathway cofactor biosynthesis; NAD(+) biosynthesis; deamido-NAD(+) from nicotinate D-ribonucleotide: step 1/1. Catalyzes the reversible adenylation of nicotinate mononucleotide (NaMN) to nicotinic acid adenine dinucleotide (NaAD). This is Probable nicotinate-nucleotide adenylyltransferase from Streptococcus mutans serotype c (strain ATCC 700610 / UA159).